Here is a 146-residue protein sequence, read N- to C-terminus: Catabolic 3-dehydroquinase (146 aa).

Tyrosine 24 acts as the Proton acceptor in catalysis. 3 residues coordinate substrate: asparagine 78, histidine 84, and aspartate 91. The active-site Proton donor is histidine 104. Residues 105-106 (IT) and arginine 115 contribute to the substrate site.

It belongs to the type-II 3-dehydroquinase family. As to quaternary structure, homododecamer. Adopts a ring-like structure, composed of an arrangement of two hexameric rings stacked on top of one another.

The enzyme catalyses 3-dehydroquinate = 3-dehydroshikimate + H2O. It functions in the pathway aromatic compound metabolism; 3,4-dihydroxybenzoate biosynthesis; 3,4-dihydroxybenzoate from 3-dehydroquinate: step 1/2. In terms of biological role, is involved in the catabolism of quinate. Allows the utilization of quinate as carbon source via the beta-ketoadipate pathway. The polypeptide is Catabolic 3-dehydroquinase (Scheffersomyces stipitis (strain ATCC 58785 / CBS 6054 / NBRC 10063 / NRRL Y-11545) (Yeast)).